The sequence spans 576 residues: V-type ATP synthase alpha chain (576 aa).

ATP is bound at residue 238 to 245 (GPFGAGKT).

This sequence belongs to the ATPase alpha/beta chains family.

The enzyme catalyses ATP + H2O + 4 H(+)(in) = ADP + phosphate + 5 H(+)(out). Produces ATP from ADP in the presence of a proton gradient across the membrane. The V-type alpha chain is a catalytic subunit. The polypeptide is V-type ATP synthase alpha chain (Borrelia turicatae (strain 91E135)).